A 137-amino-acid polypeptide reads, in one-letter code: Putative pre-16S rRNA nuclease (137 aa).

Belongs to the YqgF nuclease family.

It is found in the cytoplasm. Functionally, could be a nuclease involved in processing of the 5'-end of pre-16S rRNA. The sequence is that of Putative pre-16S rRNA nuclease from Bacillus cytotoxicus (strain DSM 22905 / CIP 110041 / 391-98 / NVH 391-98).